A 122-amino-acid chain; its full sequence is Large ribosomal subunit protein uL14 (122 aa).

The protein belongs to the universal ribosomal protein uL14 family. In terms of assembly, part of the 50S ribosomal subunit. Forms a cluster with proteins L3 and L19. In the 70S ribosome, L14 and L19 interact and together make contacts with the 16S rRNA in bridges B5 and B8.

In terms of biological role, binds to 23S rRNA. Forms part of two intersubunit bridges in the 70S ribosome. The polypeptide is Large ribosomal subunit protein uL14 (Aliarcobacter butzleri (strain RM4018) (Arcobacter butzleri)).